We begin with the raw amino-acid sequence, 511 residues long: Pickpocket protein 19 (511 aa).

Helical transmembrane passes span Leu59–Met79 and Gly471–Leu491.

The protein belongs to the amiloride-sensitive sodium channel (TC 1.A.6) family. In terms of tissue distribution, expressed in the tracheal system. Expressed in the taste-sensing terminal organ of the larval head. In adults, expressed in hairs on the tibia, femur and wing margin, but not in hairs on the tarsi of the leg.

It is found in the membrane. Functionally, part of a complex that plays a role in tracheal liquid clearance. In both larvae and adults, contributes to the behavioral response to salt. Probable role in sodium transport. This Drosophila melanogaster (Fruit fly) protein is Pickpocket protein 19 (ppk19).